Reading from the N-terminus, the 346-residue chain is Histidinol-phosphate aminotransferase (346 aa).

Residue lysine 209 is modified to N6-(pyridoxal phosphate)lysine.

It belongs to the class-II pyridoxal-phosphate-dependent aminotransferase family. Histidinol-phosphate aminotransferase subfamily. As to quaternary structure, homodimer. Pyridoxal 5'-phosphate serves as cofactor.

It carries out the reaction L-histidinol phosphate + 2-oxoglutarate = 3-(imidazol-4-yl)-2-oxopropyl phosphate + L-glutamate. The protein operates within amino-acid biosynthesis; L-histidine biosynthesis; L-histidine from 5-phospho-alpha-D-ribose 1-diphosphate: step 7/9. The chain is Histidinol-phosphate aminotransferase from Vibrio cholerae serotype O1 (strain ATCC 39315 / El Tor Inaba N16961).